The primary structure comprises 238 residues: Ribosomal RNA small subunit methyltransferase G (238 aa).

S-adenosyl-L-methionine is bound by residues glycine 77, phenylalanine 82, 128-129, and arginine 147; that span reads AE.

This sequence belongs to the methyltransferase superfamily. RNA methyltransferase RsmG family.

It localises to the cytoplasm. Functionally, specifically methylates the N7 position of guanine in position 535 of 16S rRNA. The sequence is that of Ribosomal RNA small subunit methyltransferase G from Geobacillus sp. (strain WCH70).